A 340-amino-acid polypeptide reads, in one-letter code: Protein-arginine kinase (340 aa).

A Phosphagen kinase C-terminal domain is found at 21–242; that stretch reads VVLSSRIRLA…EQIIMQERVA (222 aa). ATP contacts are provided by residues 24 to 28, His-79, Arg-113, 164 to 168, and 195 to 200; these read SSRIR, RASVM, and RGIYGE.

It belongs to the ATP:guanido phosphotransferase family.

The enzyme catalyses L-arginyl-[protein] + ATP = N(omega)-phospho-L-arginyl-[protein] + ADP + H(+). Catalyzes the specific phosphorylation of arginine residues in proteins. This Listeria innocua serovar 6a (strain ATCC BAA-680 / CLIP 11262) protein is Protein-arginine kinase.